A 100-amino-acid chain; its full sequence is Flagellar transcriptional regulator FlhD (100 aa).

The protein belongs to the FlhD family. As to quaternary structure, homodimer; disulfide-linked. Forms a heterohexamer composed of two FlhC and four FlhD subunits. Each FlhC binds a FlhD dimer, forming a heterotrimer, and a hexamer assembles by dimerization of two heterotrimers.

The protein resides in the cytoplasm. Its function is as follows. Functions in complex with FlhC as a master transcriptional regulator that regulates transcription of several flagellar and non-flagellar operons by binding to their promoter region. Activates expression of class 2 flagellar genes, including fliA, which is a flagellum-specific sigma factor that turns on the class 3 genes. Also regulates genes whose products function in a variety of physiological pathways. This chain is Flagellar transcriptional regulator FlhD, found in Ralstonia pickettii (strain 12D).